The following is a 257-amino-acid chain: Deoxyribose-phosphate aldolase (257 aa).

The Proton donor/acceptor role is filled by Asp102. The active-site Schiff-base intermediate with acetaldehyde is Lys166. Lys198 serves as the catalytic Proton donor/acceptor.

Belongs to the DeoC/FbaB aldolase family. DeoC type 2 subfamily.

It localises to the cytoplasm. It catalyses the reaction 2-deoxy-D-ribose 5-phosphate = D-glyceraldehyde 3-phosphate + acetaldehyde. It functions in the pathway carbohydrate degradation; 2-deoxy-D-ribose 1-phosphate degradation; D-glyceraldehyde 3-phosphate and acetaldehyde from 2-deoxy-alpha-D-ribose 1-phosphate: step 2/2. Functionally, catalyzes a reversible aldol reaction between acetaldehyde and D-glyceraldehyde 3-phosphate to generate 2-deoxy-D-ribose 5-phosphate. This Shewanella loihica (strain ATCC BAA-1088 / PV-4) protein is Deoxyribose-phosphate aldolase.